Reading from the N-terminus, the 259-residue chain is Small ribosomal subunit protein uS2 (259 aa).

Residues 234-259 are disordered; sequence VAEDSEEVSTVDADAITAEDFETEEV. Positions 250-259 are enriched in acidic residues; that stretch reads TAEDFETEEV.

Belongs to the universal ribosomal protein uS2 family.

The polypeptide is Small ribosomal subunit protein uS2 (Sulfurimonas denitrificans (strain ATCC 33889 / DSM 1251) (Thiomicrospira denitrificans (strain ATCC 33889 / DSM 1251))).